The following is a 682-amino-acid chain: E3 ubiquitin ligase Rnf157 (682 aa).

The N-myristoyl glycine moiety is linked to residue glycine 2. The segment at 277-317 adopts an RING-type; degenerate zinc-finger fold; sequence CVVCLSDVRDTLILPCRHCASCNVHCADTLRYQANNCPICR. Residues 330 to 333 carry the D-box 1 motif; that stretch reads RKKL. 2 disordered regions span residues 440–604 and 655–682; these read QNSS…VQED and NTQRRRLSPSSLEDPEEDRPCVWDPLAV. The segment covering 479 to 538 has biased composition (polar residues); that stretch reads ESENLTLSSSGAVDQSSCTGTPLSSTISSPEDPASSSLAQSVMSMASSQISTDTVSSMSG. A compositionally biased stretch (acidic residues) spans 585-597; that stretch reads QDAEGNDIMEEED. The D-box 2 motif lies at 658 to 661; sequence RRRL. Residues serine 662, serine 664, and serine 665 each carry the phosphoserine modification.

In terms of assembly, interacts with APBB1. Interacts with CHD1; CHD1-binding controls RNF157 stability. Also interacts with ATRN, MEGF8, TECR, MSI2, PLRG1, BYSL, MTERF3, PSMA1, MRPS18B, PRPF4, FASTKD2, SLC25A1, SMU1, CNOT9, MRPS2, MAGT1, FXR2, EMD, PSMD8, HDAC1, RAN, HSD17B12, TXNDC5 and MRPL19. As to expression, predominantly expressed in the brain.

The protein resides in the cytoplasm. It catalyses the reaction S-ubiquitinyl-[E2 ubiquitin-conjugating enzyme]-L-cysteine + [acceptor protein]-L-lysine = [E2 ubiquitin-conjugating enzyme]-L-cysteine + N(6)-ubiquitinyl-[acceptor protein]-L-lysine.. Functionally, E3 ubiquitin ligase that ubiquitinates APBB1 for its degradation by the proteasome and thus prevents apoptosis and promotes survival of neurons. Has a dual role in neurons as it is also required for dendrite growth and maintenance for which its ligase activity is not critical. May act as a scaffold molecule to regulate this process. Acts as a downstream effector of the interconnected PI3K and MAPK signaling pathways and thus participates in the regulation of the cell cycle. This chain is E3 ubiquitin ligase Rnf157 (Rnf157), found in Rattus norvegicus (Rat).